We begin with the raw amino-acid sequence, 239 residues long: Calcium-activated potassium channel subunit beta-3 (239 aa).

Topologically, residues 1–51 (MQPFSIPVQITLQGGRRRQGRTALPASGISNGDPLKVHPKLPSSAGEDRAT) are cytoplasmic. The disordered stretch occupies residues 15-38 (GRRRQGRTALPASGISNGDPLKVH). The chain crosses the membrane as a helical span at residues 52-72 (LLGIAMMASSVLMFFLLGTTV). The Extracellular portion of the chain corresponds to 73-197 (LKPFMLSSPR…GVVLRKSGHK (125 aa)). N-linked (GlcNAc...) asparagine glycosylation is found at asparagine 86, asparagine 123, and asparagine 174. A helical membrane pass occupies residues 198–218 (VVFHCLFWPLLTLLGGALIVG). Residues 219–239 (LVRLTQHLSFQCEKYRAVVRA) are Cytoplasmic-facing.

It belongs to the KCNMB (TC 8.A.14.1) family. KCNMB3 subfamily. Interacts with KCNMA1 tetramer. There are probably 4 molecules of KCMNB3 per KCNMA1 tetramer. In terms of processing, N-glycosylated. The extracellular domain contains disulfide bond essential for the gating mechanism.

It localises to the membrane. Its function is as follows. Regulatory subunit of the calcium activated potassium KCNMA1 (maxiK) channel. Modulates the calcium sensitivity and gating kinetics of KCNMA1, thereby contributing to KCNMA1 channel diversity. Alters the functional properties of the current expressed by the KCNMA1 channel. May partially inactivate the current of KCNBMA. Two or more subunits of KCNMB3 are required to block the KCNMA1 tetramer. This is Calcium-activated potassium channel subunit beta-3 from Rattus norvegicus (Rat).